The following is a 602-amino-acid chain: Portal protein (602 aa).

Coiled coils occupy residues 324-352 and 486-542; these read NNQADLSALSQKAEQKRQLLRLLAGLNDE and ITND…EQGA. Residues 567 to 602 are disordered; sequence ANNANNEESNNKPKKKLKTSDKTTWRKYPSAQNLDY.

In terms of assembly, homododecamer.

It localises to the virion. Its function is as follows. Forms the portal vertex of the capsid. This portal plays critical roles in head assembly, genome packaging, neck/tail attachment, and genome ejection. The portal protein multimerizes as a single ring-shaped homododecamer arranged around a central channel. The polypeptide is Portal protein (Helicobacter pylori bacteriophage KHP30).